The primary structure comprises 345 residues: Class I histocompatibility antigen, F10 alpha chain (345 aa).

The signal sequence occupies residues 1-22 (MGPCGALGLGLLLAAVCGAAAP). Residues 23–110 (ELHTLRYIQT…ILQRRYNQTG (88 aa)) are alpha-1. Residues 23–301 (ELHTLRYIQT…WEPPQPNLVP (279 aa)) are Extracellular-facing. N59 and N107 each carry an N-linked (GlcNAc...) asparagine glycan. The segment at 111–201 (GSHTVQWMYG…EYGKAELGRR (91 aa)) is alpha-2. Cystine bridges form between C121/C183 and C221/C277. The interval 202–292 (ERPEVRVWGK…SLPQPGLYSW (91 aa)) is alpha-3. Residues 204–293 (PEVRVWGKEA…LPQPGLYSWE (90 aa)) enclose the Ig-like C1-type domain. Positions 293 to 301 (EPPQPNLVP) are connecting peptide. The chain crosses the membrane as a helical span at residues 302–324 (IVAGVAVAIVAIAIMVGVGFIIY). The Cytoplasmic segment spans residues 325-345 (RRHAGKKGKGYNIAPGSNPAI).

Belongs to the MHC class I family. In terms of assembly, heterodimer of an alpha chain and a beta chain (beta-2-microglobulin).

Its subcellular location is the membrane. Its function is as follows. Involved in the presentation of foreign antigens to the immune system. This chain is Class I histocompatibility antigen, F10 alpha chain, found in Gallus gallus (Chicken).